Reading from the N-terminus, the 121-residue chain is Large ribosomal subunit protein uL18 (121 aa).

Belongs to the universal ribosomal protein uL18 family. In terms of assembly, part of the 50S ribosomal subunit; part of the 5S rRNA/L5/L18/L25 subcomplex. Contacts the 5S and 23S rRNAs.

This is one of the proteins that bind and probably mediate the attachment of the 5S RNA into the large ribosomal subunit, where it forms part of the central protuberance. This Streptococcus equi subsp. zooepidemicus (strain MGCS10565) protein is Large ribosomal subunit protein uL18.